A 221-amino-acid chain; its full sequence is Immediate early response gene 2 protein (221 aa).

Met1 carries the N-acetylmethionine modification. Residues 105-155 (ETPALCDPPPARVSRKRRSSSDLSDGSDAGLVPSKKARLEEVEGEATSEVP) are disordered. The span at 125-136 (SDLSDGSDAGLV) shows a compositional bias: low complexity.

This sequence belongs to the IER family.

The protein resides in the cytoplasm. Its subcellular location is the nucleus. DNA-binding protein that seems to act as a transcription factor. Involved in the regulation of neuronal differentiation, acts upon JNK-signaling pathway activation and plays a role in neurite outgrowth in hippocampal cells. May mediate with FIBP FGF-signaling in the establishment of laterality in the embryo. Promotes cell motility, seems to stimulate tumor metastasis. The chain is Immediate early response gene 2 protein (Ier2) from Mus musculus (Mouse).